A 415-amino-acid chain; its full sequence is Glutamyl-tRNA reductase (415 aa).

Substrate is bound by residues 49–52 (TCNR), serine 104, 109–111 (EPQ), and glutamine 115. Catalysis depends on cysteine 50, which acts as the Nucleophile. 184 to 189 (GAGEMI) contacts NADP(+).

The protein belongs to the glutamyl-tRNA reductase family. In terms of assembly, homodimer.

It catalyses the reaction (S)-4-amino-5-oxopentanoate + tRNA(Glu) + NADP(+) = L-glutamyl-tRNA(Glu) + NADPH + H(+). Its pathway is porphyrin-containing compound metabolism; protoporphyrin-IX biosynthesis; 5-aminolevulinate from L-glutamyl-tRNA(Glu): step 1/2. Catalyzes the NADPH-dependent reduction of glutamyl-tRNA(Glu) to glutamate 1-semialdehyde (GSA). This is Glutamyl-tRNA reductase from Neisseria meningitidis serogroup B (strain ATCC BAA-335 / MC58).